A 594-amino-acid polypeptide reads, in one-letter code: ATP-dependent lipid A-core flippase (594 aa).

A run of 6 helical transmembrane segments spans residues 35–55 (FVLAIIAMGLVAASEGIIPKV), 64–84 (FGGSYAGKLWHVPALLVGVAL), 135–155 (AVIFEVNQVMQILTGVLITLV), 161–181 (VVALLIYLFYTNWKLTLVVAV), 262–282 (VTAFLASLALSVILTIAMIQA), and 289–309 (IGGFTGFVMAMLLLISPLKHL). The region spanning 36-318 (VLAIIAMGLV…LADLNQPLQR (283 aa)) is the ABC transmembrane type-1 domain. The region spanning 350–588 (LVFDNVGFRY…NGLYAGLHRI (239 aa)) is the ABC transporter domain. Position 384–391 (384–391 (GPSGSGKT)) interacts with ATP.

This sequence belongs to the ABC transporter superfamily. Lipid exporter (TC 3.A.1.106) family. As to quaternary structure, homodimer.

Its subcellular location is the cell inner membrane. The enzyme catalyses ATP + H2O + lipid A-core oligosaccharideSide 1 = ADP + phosphate + lipid A-core oligosaccharideSide 2.. Its function is as follows. Involved in lipopolysaccharide (LPS) biosynthesis. Translocates lipid A-core from the inner to the outer leaflet of the inner membrane. Transmembrane domains (TMD) form a pore in the inner membrane and the ATP-binding domain (NBD) is responsible for energy generation. The polypeptide is ATP-dependent lipid A-core flippase (Cupriavidus metallidurans (strain ATCC 43123 / DSM 2839 / NBRC 102507 / CH34) (Ralstonia metallidurans)).